The following is an 881-amino-acid chain: Plakophilin-2 (881 aa).

Residues 1-348 (MAAPGAPAEY…FTDSQLGNAD (348 aa)) are required for interaction with influenza A virus RNA polymerase subunit PB1. The required for binding to single-stranded DNA stretch occupies residues 1-360 (MAAPGAPAEY…MTLERAVSML (360 aa)). At Ser-44 the chain carries Phosphoserine. The residue at position 46 (Arg-46) is an Omega-N-methylarginine. Ser-82 bears the Phosphoserine; by MARK3 mark. A phosphoserine mark is found at Ser-132, Ser-135, Ser-151, Ser-154, Ser-155, Ser-169, and Ser-172. Thr-177 carries the phosphothreonine modification. 5 positions are modified to phosphoserine: Ser-183, Ser-197, Ser-251, Ser-294, and Ser-329. Residues 282–314 (QNRASRSSWHQSSFHSTRTLREAGPSVAVDSSG) form a disordered region. Positions 286–297 (SRSSWHQSSFHS) are enriched in low complexity. ARM repeat units follow at residues 341-383 (DSQL…ECFQ), 385-424 (SEARKRVNQLRGILKLLQLLKVQNEDVQRAVCGALRNLVF), 427-467 (NDNK…NLRS), 571-616 (DGRK…NLSY), 671-711 (PKGV…NLTA), 719-758 (SVAQTVVQKESGLQHTRKMLHVGDPSVKKTAISLLRNLSR), 763-804 (QNEI…NIIQ), and 807-849 (YQNA…SLWA).

It belongs to the beta-catenin family. In terms of assembly, interacts with DSC2. Interacts with JUP. Interacts with KRT5/CK5, KRT8/CK8, KRT14/CK14, KRT18/CK18 and VIM. Interacts (via N-terminus) with MARK3/C-TAK1. Interacts with DSP. Interacts with DSG1, DSG2 and DSG3. Interacts (via N-terminus) with CTNNB1. Interacts with CDH1. Interacts with the RNA polymerase III (Pol III) complex proteins POLR3A/RPC155, POLR3F/RPC39 and POLR3C/RPC82. Interacts with CTNNA3. Interacts (via N-terminus) with SCN5A/Nav1.5. Interacts with ANK3/ANKG and GJA1/CX43. As to quaternary structure, (Microbial infection) Interacts (via N-terminus) with influenza A virus RNA polymerase subunit PB1 (via C-terminus); the interaction competitively inhibits the interaction between the subunits PB1 and PB2. Expressed at intercalated disks in the heart (at protein level). Expressed in gingival epithelial, endothelial and fibroblast cells (at protein level). Faintly expressed in tracheal epithelial cells (at protein level). Widely expressed. Found at desmosomal plaques in simple and stratified epithelia and in non-epithelial tissues such as myocardium and lymph node follicles. In most stratified epithelia found in the desmosomes of the basal cell layer and seems to be absent from suprabasal strata. In terms of tissue distribution, (Microbial infection) Abundantly expressed in tracheal epithelial cells following influenza A virus infection (at protein level).

The protein localises to the nucleus. It localises to the cell junction. It is found in the desmosome. Its subcellular location is the cytoplasm. A component of desmosome cell-cell junctions which are required for positive regulation of cellular adhesion. Regulates focal adhesion turnover resulting in changes in focal adhesion size, cell adhesion and cell spreading, potentially via transcriptional modulation of beta-integrins. Required to maintain gingival epithelial barrier function. Important component of the desmosome that is also required for localization of desmosome component proteins such as DSC2, DSG2 and JUP to the desmosome cell-cell junction. Required for the formation of desmosome cell junctions in cardiomyocytes, thereby required for the correct formation of the heart, specifically trabeculation and formation of the atria walls. Loss of desmosome cell junctions leads to mis-localization of DSP and DSG2 resulting in disruption of cell-cell adhesion and disordered intermediate filaments. Modulates profibrotic gene expression in cardiomyocytes via regulation of DSP expression and subsequent activation of downstream TGFB1 and MAPK14/p38 MAPK signaling. Required for cardiac sodium current propagation and electrical synchrony in cardiac myocytes, via ANK3 stabilization and modulation of SCN5A/Nav1.5 localization to cell-cell junctions. Required for mitochondrial function, nuclear envelope integrity and positive regulation of SIRT3 transcription via maintaining DES localization at its nuclear envelope and cell tip anchoring points, and thereby preserving regulation of the transcriptional program. Maintenance of nuclear envelope integrity protects against DNA damage and transcriptional dysregulation of genes, especially those involved in the electron transport chain, thereby preserving mitochondrial function and protecting against superoxide radical anion generation. Binds single-stranded DNA (ssDNA). May regulate the localization of GJA1 to gap junctions in intercalated disks of the heart. Involved in the inhibition of viral infection by influenza A viruses (IAV). Acts as a host restriction factor for IAV viral propagation, potentially via disrupting the interaction of IAV polymerase complex proteins. The sequence is that of Plakophilin-2 from Homo sapiens (Human).